The following is a 389-amino-acid chain: PqqA peptide cyclase (389 aa).

The region spanning 19 to 234 (VGLPLWLLAE…TNEYRARLEA (216 aa)) is the Radical SAM core domain. Positions 33, 37, and 40 each coordinate [4Fe-4S] cluster.

This sequence belongs to the radical SAM superfamily. PqqE family. Interacts with PqqD. The interaction is necessary for activity of PqqE. [4Fe-4S] cluster is required as a cofactor.

The catalysed reaction is [PQQ precursor protein] + S-adenosyl-L-methionine = E-Y cross-linked-[PQQ precursor protein] + 5'-deoxyadenosine + L-methionine + H(+). It participates in cofactor biosynthesis; pyrroloquinoline quinone biosynthesis. In terms of biological role, catalyzes the cross-linking of a glutamate residue and a tyrosine residue in the PqqA protein as part of the biosynthesis of pyrroloquinoline quinone (PQQ). The protein is PqqA peptide cyclase of Pseudomonas syringae pv. syringae (strain B728a).